The sequence spans 93 residues: Translation initiation factor IF-1 (93 aa).

The S1-like domain occupies M1–K72. The disordered stretch occupies residues R70 to R93.

It belongs to the IF-1 family. In terms of assembly, component of the 30S ribosomal translation pre-initiation complex which assembles on the 30S ribosome in the order IF-2 and IF-3, IF-1 and N-formylmethionyl-tRNA(fMet); mRNA recruitment can occur at any time during PIC assembly.

It is found in the cytoplasm. One of the essential components for the initiation of protein synthesis. Stabilizes the binding of IF-2 and IF-3 on the 30S subunit to which N-formylmethionyl-tRNA(fMet) subsequently binds. Helps modulate mRNA selection, yielding the 30S pre-initiation complex (PIC). Upon addition of the 50S ribosomal subunit IF-1, IF-2 and IF-3 are released leaving the mature 70S translation initiation complex. This is Translation initiation factor IF-1 from Nitrobacter winogradskyi (strain ATCC 25391 / DSM 10237 / CIP 104748 / NCIMB 11846 / Nb-255).